Consider the following 327-residue polypeptide: Nucleotide-binding protein Mflv_3714 (327 aa).

Over residues 1 to 22 (MTRQGMRDDLRGEADSVVHDGT) the composition is skewed to basic and acidic residues. The tract at residues 1–29 (MTRQGMRDDLRGEADSVVHDGTDDIDNEN) is disordered. 50-57 (GLSGAGRG) contributes to the ATP binding site. GTP is bound at residue 101–104 (DVRS).

This sequence belongs to the RapZ-like family.

Its function is as follows. Displays ATPase and GTPase activities. This is Nucleotide-binding protein Mflv_3714 from Mycolicibacterium gilvum (strain PYR-GCK) (Mycobacterium gilvum (strain PYR-GCK)).